The primary structure comprises 586 residues: uncharacterized protein (586 aa).

This is an uncharacterized protein from Saccharomyces cerevisiae (strain ATCC 204508 / S288c) (Baker's yeast).